The chain runs to 1021 residues: Multidrug resistance protein MdtC (1021 aa).

At 1-6 (MKFFAL) the chain is on the cytoplasmic side. Residues 7-29 (FIYRPVATILLSVAITLCGILGF) traverse the membrane as a helical segment. At 30–335 (RMLPVAPLPQ…TIRASLEEVE (306 aa)) the chain is on the periplasmic side. A helical membrane pass occupies residues 336-353 (QTLIISVALVILVVFLFL). The Cytoplasmic segment spans residues 354–359 (RSGRAT). Residues 360 to 379 (IIPAVAVPVSLIGTFAAMYL) traverse the membrane as a helical segment. Over 380 to 388 (CGFSLNNLS) the chain is Periplasmic. A helical transmembrane segment spans residues 389 to 411 (LMALTIATGFVVDDAIVVLENIA). The Cytoplasmic segment spans residues 412–430 (RHLEAGMKPLQAALQGTRE). Residues 431-453 (VGFTVLSMSLSLVAVFLPLLLMG) form a helical membrane-spanning segment. The Periplasmic portion of the chain corresponds to 454 to 467 (GLPGRLLREFAVTL). A helical membrane pass occupies residues 468 to 490 (SVAIGISLLVSLTLTPMMCGWML). Over 491–848 (KASKPREQKR…QVFQETMNSQ (358 aa)) the chain is Cytoplasmic. Residues 849–871 (VILIIAAIATVYIVLGILYESYV) traverse the membrane as a helical segment. Topologically, residues 872–890 (HPLTILSTLPSAGVGALLA) are periplasmic. A helical membrane pass occupies residues 891-913 (LELFNAPFSLIALIGIMLLIGIV). Over 914-943 (KKNAIMMVDFALEAQRHGNLTPQEAIFQAC) the chain is Cytoplasmic. A helical membrane pass occupies residues 944-966 (LLRFRPIMMTTLAALFGALPLVL). Over 967-980 (SGGDGSELRQPLEI) the chain is Periplasmic. Residues 981–1003 (TIVGGLVMSQLLTLYTTPVVYLF) form a helical membrane-spanning segment. The Cytoplasmic segment spans residues 1004–1021 (FDRLRLRFSRKPKQTVTE).

Belongs to the resistance-nodulation-cell division (RND) (TC 2.A.6) family. MdtC subfamily. In terms of assembly, part of a tripartite efflux system composed of MdtA, MdtB and MdtC. MdtC forms a heteromultimer with MdtB.

It is found in the cell inner membrane. The chain is Multidrug resistance protein MdtC from Shigella flexneri.